The following is a 232-amino-acid chain: Small ribosomal subunit protein uS3 (232 aa).

A KH type-2 domain is found at 39–107 (VRRFLEQRLK…PVHVNIEEVR (69 aa)).

It belongs to the universal ribosomal protein uS3 family. Part of the 30S ribosomal subunit. Forms a tight complex with proteins S10 and S14.

In terms of biological role, binds the lower part of the 30S subunit head. Binds mRNA in the 70S ribosome, positioning it for translation. This Chromohalobacter salexigens (strain ATCC BAA-138 / DSM 3043 / CIP 106854 / NCIMB 13768 / 1H11) protein is Small ribosomal subunit protein uS3.